The chain runs to 498 residues: Probable malate:quinone oxidoreductase (498 aa).

The protein belongs to the MQO family. FAD is required as a cofactor.

The catalysed reaction is (S)-malate + a quinone = a quinol + oxaloacetate. Its pathway is carbohydrate metabolism; tricarboxylic acid cycle; oxaloacetate from (S)-malate (quinone route): step 1/1. This chain is Probable malate:quinone oxidoreductase, found in Granulibacter bethesdensis (strain ATCC BAA-1260 / CGDNIH1).